The sequence spans 610 residues: MSEIFDAKAFLKTVTSQPGVYRMYDAGGTVIYVGKAKDLKKRLSSYFRSNLASRKTEALVAQIQHIDVTVTHTETEALLLEHNYIKLYQPRYNVLLRDDKSYPFIFLSGDTHPRLSMHRGAKHAKGEYFGPFPNGYAVRETLALLQKIFPIRQCENSVYRNRSRPCLQYQIGRCLGPCVAGLVSEEEYTQQVEYVRLFLSGKDDQVLTQLIARMEKASQDLAFEEAARIRDQIQAVRRVTEKQFVSNAGDDLDVIGVAFDAGMACVHVLFIRQGKVLGSRSYFPKVPGGTELGEVVETFVGQFYLQGSQMRTLPGEILLDFNLSDKTLLADSLSELAGRRIHVQTKPRGDRARYLKLARTNAATALITKLSQQSTITQRLTALAAVLKLPAIKRMECFDISHTMGEQTVASCVVFDANGPLRAEYRRYNIAGITPGDDYAAMNQVLRRRYGKAIEESKIPDVILIDGGKGQLAQAKAVFAELDVPWDKHRPLLLGVAKGADRKAGLETLFFEPEGEGFSLPPDSPALHVIQHIRDESHDHAIGGHRKKRAKVKNTSTLETIEGVGPKRRQMLLKYMGGLQGLRNASVEEIAKVPGISQGLAEKIFWSLKH.

Residues 16–94 (SQPGVYRMYD…IKLYQPRYNV (79 aa)) form the GIY-YIG domain. Residues 204–239 (DQVLTQLIARMEKASQDLAFEEAARIRDQIQAVRRV) form the UVR domain.

The protein belongs to the UvrC family. In terms of assembly, interacts with UvrB in an incision complex.

It is found in the cytoplasm. Its function is as follows. The UvrABC repair system catalyzes the recognition and processing of DNA lesions. UvrC both incises the 5' and 3' sides of the lesion. The N-terminal half is responsible for the 3' incision and the C-terminal half is responsible for the 5' incision. This chain is UvrABC system protein C, found in Salmonella paratyphi B (strain ATCC BAA-1250 / SPB7).